Reading from the N-terminus, the 189-residue chain is GTPase KRas (189 aa).

N-acetylmethionine is present on Met1. At Thr2 the chain carries N-acetylthreonine; in GTPase KRas, N-terminally processed. GTP contacts are provided by residues 10-18 (GAGGVGKSA), 29-35 (VDEYDPT), and 59-60 (AG). The short motif at 32–40 (YDPTIEDSY) is the Effector region element. Lys104 carries the post-translational modification N6-acetyllysine. 116 to 119 (NKCD) contributes to the GTP binding site. The segment at 166–185 (YRLKKISKEEKTPGCVKIKK) is hypervariable region. Lys170 participates in a covalent cross-link: Glycyl lysine isopeptide (Lys-Gly) (interchain with G-Cter in ubiquitin). Residue Cys180 is the site of S-palmitoyl cysteine attachment. 3 N6-palmitoyl lysine lipidation sites follow: Lys182, Lys184, and Lys185. Residue Cys186 is modified to Cysteine methyl ester. Residue Cys186 is the site of S-farnesyl cysteine attachment. Positions 187 to 189 (VIM) are cleaved as a propeptide — removed in mature form.

This sequence belongs to the small GTPase superfamily. Ras family. Interacts with PHLPP. Interacts (active GTP-bound form preferentially) with RGS14. Interacts (when farnesylated) with PDE6D; this promotes dissociation from the cell membrane. Interacts with SOS1. Interacts (when farnesylated) with GPR31. Interacts with RAP1GDS1. Interacts (active GTP-bound form) with both SHOC2 and PP1c (all isoforms) to form a tertiary complex; SHOC2 and PP1c preferably bind M-Ras/MRAS, but they also bind K-Ras/KRAS, N-Ras/NRAS and H-Ras/HRAS. Interacts (GTP-bound form) with MAPKAP1/SIN1; inhibiting K-Ras/KRAS activity. As to quaternary structure, interacts (when farnesylated) with GPR31. Post-translationally, acetylation at Lys-104 prevents interaction with guanine nucleotide exchange factors (GEFs). In terms of processing, ubiquitinated by the BCR(LZTR1) E3 ubiquitin ligase complex at Lys-170 in a non-degradative manner, leading to inhibit Ras signaling by decreasing Ras association with membranes. Palmitoylated at Lys-182, Lys-184 and Lys-185. Lysine-depalmitoylation by SIRT2 promotes its localization to endomembranes in endocytic pathways.

Its subcellular location is the cell membrane. It is found in the endomembrane system. The protein resides in the cytoplasm. The protein localises to the cytosol. The enzyme catalyses GTP + H2O = GDP + phosphate + H(+). With respect to regulation, alternates between an inactive form bound to GDP and an active form bound to GTP. Activated by a guanine nucleotide-exchange factor (GEF) and inactivated by a GTPase-activating protein (GAP). Interaction with SOS1 promotes exchange of bound GDP to GTP. In terms of biological role, ras proteins bind GDP/GTP and possess intrinsic GTPase activity. Plays an important role in the regulation of cell proliferation. Plays a role in promoting oncogenic events by inducing transcriptional silencing of tumor suppressor genes (TSGs) in colorectal cancer (CRC) cells in a ZNF304-dependent manner. In Rattus norvegicus (Rat), this protein is GTPase KRas (Kras).